A 453-amino-acid chain; its full sequence is Serine/threonine-protein kinase VRK3 (453 aa).

Residues 30-123 (EDGGTQSAVT…QSPQTLKRTR (94 aa)) form a disordered region. Residues 33-46 (GTQSAVTPHVSSVP) are compositionally biased toward polar residues. Positions 49-64 (RRDLNSSFETSPKKVK) match the Nuclear localization signal motif. A phosphoserine mark is found at serine 54, serine 55, serine 59, serine 82, serine 83, and serine 108. Polar residues predominate over residues 81–101 (DSSGSDNTLTSPDRATGTRSR). The span at 109-123 (PLSNRQSPQTLKRTR) shows a compositional bias: polar residues. Residues 125 to 436 (TTSLQALATG…TLRNSLEALL (312 aa)) form the Protein kinase domain.

Belongs to the protein kinase superfamily. CK1 Ser/Thr protein kinase family. VRK subfamily. In terms of assembly, interacts with DUSP3. Interacts with RAN. Interacts with HSP70/HSPA1A. In terms of processing, phosphorylated at Ser-108 by CDK5; leading to protection of the cell against H2O2-induced apoptosis. Post-translationally, ubiquitinated by RNF144A. As to expression, expressed in liver, kidney, muscle, thymus, and bone marrow. Weakly expressed in spleen.

The protein localises to the nucleus. It is found in the cytoplasm. The enzyme catalyses L-seryl-[protein] + ATP = O-phospho-L-seryl-[protein] + ADP + H(+). Functionally, plays a role in the regulation of the cell cycle by phosphorylating the nuclear envelope protein barrier-to-autointegration factor/BAF that is required for disassembly and reassembly, respectively, of the nuclear envelope during mitosis. Under normal physiological conditions, negatively regulates ERK activity along with VHR phosphatase in the nucleus, causing timely and transient action of ERK. Stress conditions activate CDK5 which phosphorylates VRK3 to increase VHR phosphatase activity and suppress prolonged ERK activation that causes cell death. For example, upon glutamate induction, promotes nuclear localization of HSP70/HSPA1A to inhibit ERK activation via VHR phosphatase. In Mus musculus (Mouse), this protein is Serine/threonine-protein kinase VRK3 (Vrk3).